The sequence spans 274 residues: 2-dehydro-3-deoxyphosphooctonate aldolase (274 aa).

This sequence belongs to the KdsA family.

The protein resides in the cytoplasm. It carries out the reaction D-arabinose 5-phosphate + phosphoenolpyruvate + H2O = 3-deoxy-alpha-D-manno-2-octulosonate-8-phosphate + phosphate. Its pathway is carbohydrate biosynthesis; 3-deoxy-D-manno-octulosonate biosynthesis; 3-deoxy-D-manno-octulosonate from D-ribulose 5-phosphate: step 2/3. It functions in the pathway bacterial outer membrane biogenesis; lipopolysaccharide biosynthesis. The protein is 2-dehydro-3-deoxyphosphooctonate aldolase of Rickettsia typhi (strain ATCC VR-144 / Wilmington).